Reading from the N-terminus, the 428-residue chain is Glutamate-1-semialdehyde 2,1-aminomutase 2 (428 aa).

Residue K267 is modified to N6-(pyridoxal phosphate)lysine.

Belongs to the class-III pyridoxal-phosphate-dependent aminotransferase family. HemL subfamily. In terms of assembly, homodimer. Pyridoxal 5'-phosphate is required as a cofactor.

The protein resides in the cytoplasm. It catalyses the reaction (S)-4-amino-5-oxopentanoate = 5-aminolevulinate. The protein operates within porphyrin-containing compound metabolism; protoporphyrin-IX biosynthesis; 5-aminolevulinate from L-glutamyl-tRNA(Glu): step 2/2. This chain is Glutamate-1-semialdehyde 2,1-aminomutase 2, found in Oceanobacillus iheyensis (strain DSM 14371 / CIP 107618 / JCM 11309 / KCTC 3954 / HTE831).